The primary structure comprises 656 residues: DNA topoisomerase 3 (656 aa).

Residues 2–156 (KVLCVAEKNS…QVYRAVFSHL (155 aa)) enclose the Toprim domain. The region spanning 172 to 635 (DMKSVHAVGT…DIVEKYRKYW (464 aa)) is the Topo IA-type catalytic domain. Tyr-356 serves as the catalytic O-(5'-phospho-DNA)-tyrosine intermediate.

It belongs to the type IA topoisomerase family. In terms of assembly, forms a complex with SGS1 and RMI1. Interacts with SGS1.

The enzyme catalyses ATP-independent breakage of single-stranded DNA, followed by passage and rejoining.. Its function is as follows. Releases the supercoiling and torsional tension of DNA introduced during the DNA replication and transcription by transiently cleaving and rejoining one strand of the DNA duplex. Introduces a single-strand break via transesterification at a target site in duplex DNA. The scissile phosphodiester is attacked by the catalytic tyrosine of the enzyme, resulting in the formation of a DNA-(5'-phosphotyrosyl)-enzyme intermediate and the expulsion of a 3'-OH DNA strand. The free DNA strand than undergoes passage around the unbroken strand thus removing DNA supercoils. Finally, in the religation step, the DNA 3'-OH attacks the covalent intermediate to expel the active-site tyrosine and restore the DNA phosphodiester backbone. Essential for proper chromosome segregation in both meiosis and mitosis. Weakly relaxes negative supercoils and displays a distinct preference for binding single-stranded DNA. The TOP3-SGS1 protein complex may function as a eukaryotic reverse gyrase introducing positive supercoils into extrachromosomal ribosomal DNA rings. The polypeptide is DNA topoisomerase 3 (TOP3) (Saccharomyces cerevisiae (strain ATCC 204508 / S288c) (Baker's yeast)).